A 312-amino-acid chain; its full sequence is Malate dehydrogenase (312 aa).

NAD(+) is bound by residues 7–13 (GAAGGIG) and D34. Substrate-binding residues include R81 and R87. NAD(+) contacts are provided by residues N94 and 117 to 119 (ITN). Substrate-binding residues include N119 and R153. H177 acts as the Proton acceptor in catalysis. M227 contacts NAD(+).

Belongs to the LDH/MDH superfamily. MDH type 1 family. Homodimer.

The catalysed reaction is (S)-malate + NAD(+) = oxaloacetate + NADH + H(+). Its function is as follows. Catalyzes the reversible oxidation of malate to oxaloacetate. The chain is Malate dehydrogenase from Escherichia coli O17:K52:H18 (strain UMN026 / ExPEC).